A 452-amino-acid chain; its full sequence is Pup--protein ligase (452 aa).

Residue glutamate 9 coordinates Mg(2+). Arginine 53 contacts ATP. Residue tyrosine 55 coordinates Mg(2+). The Proton acceptor role is filled by aspartate 57. Glutamate 63 is a Mg(2+) binding site. Residues threonine 66 and tryptophan 419 each coordinate ATP.

The protein belongs to the Pup ligase/Pup deamidase family. Pup-conjugating enzyme subfamily.

The enzyme catalyses ATP + [prokaryotic ubiquitin-like protein]-L-glutamate + [protein]-L-lysine = ADP + phosphate + N(6)-([prokaryotic ubiquitin-like protein]-gamma-L-glutamyl)-[protein]-L-lysine.. The protein operates within protein degradation; proteasomal Pup-dependent pathway. It participates in protein modification; protein pupylation. In terms of biological role, catalyzes the covalent attachment of the prokaryotic ubiquitin-like protein modifier Pup to the proteasomal substrate proteins, thereby targeting them for proteasomal degradation. This tagging system is termed pupylation. The ligation reaction involves the side-chain carboxylate of the C-terminal glutamate of Pup and the side-chain amino group of a substrate lysine. The sequence is that of Pup--protein ligase from Frankia alni (strain DSM 45986 / CECT 9034 / ACN14a).